The sequence spans 419 residues: UDP-N-acetylglucosamine 1-carboxyvinyltransferase (419 aa).

22–23 (KN) contributes to the phosphoenolpyruvate binding site. Arg-93 contributes to the UDP-N-acetyl-alpha-D-glucosamine binding site. Cys-117 acts as the Proton donor in catalysis. Cys-117 is subject to 2-(S-cysteinyl)pyruvic acid O-phosphothioketal. Asp-306 and Ile-328 together coordinate UDP-N-acetyl-alpha-D-glucosamine.

The protein belongs to the EPSP synthase family. MurA subfamily.

It is found in the cytoplasm. The catalysed reaction is phosphoenolpyruvate + UDP-N-acetyl-alpha-D-glucosamine = UDP-N-acetyl-3-O-(1-carboxyvinyl)-alpha-D-glucosamine + phosphate. Its pathway is cell wall biogenesis; peptidoglycan biosynthesis. Functionally, cell wall formation. Adds enolpyruvyl to UDP-N-acetylglucosamine. The polypeptide is UDP-N-acetylglucosamine 1-carboxyvinyltransferase (Idiomarina loihiensis (strain ATCC BAA-735 / DSM 15497 / L2-TR)).